Consider the following 263-residue polypeptide: 3'-5' ssDNA/RNA exonuclease TatD (263 aa).

A divalent metal cation is bound by residues E91, H127, and H152.

This sequence belongs to the metallo-dependent hydrolases superfamily. TatD-type hydrolase family. TatD subfamily. Monomer. It depends on Mg(2+) as a cofactor.

The protein localises to the cytoplasm. Functionally, 3'-5' exonuclease that prefers single-stranded DNA and RNA. May play a role in the H(2)O(2)-induced DNA damage repair. The polypeptide is 3'-5' ssDNA/RNA exonuclease TatD (Cronobacter sakazakii (strain ATCC BAA-894) (Enterobacter sakazakii)).